The following is a 240-amino-acid chain: MATDELATKLSRRLQMEGEGGGETPEQPGLNGAAAAAAGAPDEAAEALGSADCELSAKLLRRADLNQGIGEPQSPSRRVFNPYTEFKEFSRKQIKDMEKMFKQYDAGRDGFIDLMELKLMMEKLGAPQTHLGLKNMIKEVDEDFDSKLSFREFLLIFRKAAAGELQEDSGLCVLARLSEIDVSSEGVKGAKSFFEAKVQAINVSSRFEEEIKAEQEERKKQAEEMKQRKAAFKELQSTFK.

Ala-2 carries the post-translational modification N-acetylalanine. Position 11 is a phosphoserine (Ser-11). The tract at residues 13 to 38 is disordered; that stretch reads RLQMEGEGGGETPEQPGLNGAAAAAA. Phosphoserine occurs at positions 74 and 76. Tyr-83 carries the post-translational modification Phosphotyrosine. EF-hand domains follow at residues 92–127 and 128–163; these read KQIKDMEKMFKQYDAGRDGFIDLMELKLMMEKLGAP and QTHLGLKNMIKEVDEDFDSKLSFREFLLIFRKAAAG. 8 residues coordinate Ca(2+): Asp-105, Asp-109, Glu-116, Asp-141, Asp-143, Asp-145, Lys-147, and Glu-152. Lys-233 carries the post-translational modification N6-acetyllysine.

Interacts with CASP9; with inactive form. As to expression, found in lymphocytes; preferentially expressed in CD8+ cells.

It localises to the membrane raft. Its function is as follows. May regulate B-cell receptor (BCR)-induced immature and primary B-cell apoptosis. Plays a role as negative regulator of the canonical NF-kappa-B-activating branch. Controls spontaneous apoptosis through the regulation of BCL2L1 abundance. The polypeptide is EF-hand domain-containing protein D2 (EFHD2) (Homo sapiens (Human)).